The primary structure comprises 367 residues: tRNA-specific 2-thiouridylase MnmA (367 aa).

ATP-binding positions include 14–21 (AMSGGVDS) and Leu40. Cys108 acts as the Nucleophile in catalysis. Cys108 and Cys204 are joined by a disulfide. Residue Gly132 participates in ATP binding. The tract at residues 154-156 (KDQ) is interaction with tRNA. The active-site Cysteine persulfide intermediate is the Cys204.

It belongs to the MnmA/TRMU family.

It is found in the cytoplasm. The catalysed reaction is S-sulfanyl-L-cysteinyl-[protein] + uridine(34) in tRNA + AH2 + ATP = 2-thiouridine(34) in tRNA + L-cysteinyl-[protein] + A + AMP + diphosphate + H(+). Functionally, catalyzes the 2-thiolation of uridine at the wobble position (U34) of tRNA, leading to the formation of s(2)U34. The chain is tRNA-specific 2-thiouridylase MnmA from Rickettsia bellii (strain OSU 85-389).